We begin with the raw amino-acid sequence, 68 residues long: Small ribosomal subunit protein bS21 (68 aa).

Belongs to the bacterial ribosomal protein bS21 family.

This is Small ribosomal subunit protein bS21 from Ruegeria sp. (strain TM1040) (Silicibacter sp.).